We begin with the raw amino-acid sequence, 441 residues long: Histidinol dehydrogenase (441 aa).

Substrate is bound by residues threonine 240, glutamine 262, and histidine 265. Positions 262 and 265 each coordinate Zn(2+). Active-site proton acceptor residues include glutamate 332 and histidine 333. Substrate is bound by residues histidine 333, aspartate 366, glutamate 420, and histidine 425. A Zn(2+)-binding site is contributed by aspartate 366. Histidine 425 serves as a coordination point for Zn(2+).

It belongs to the histidinol dehydrogenase family. Zn(2+) is required as a cofactor.

It carries out the reaction L-histidinol + 2 NAD(+) + H2O = L-histidine + 2 NADH + 3 H(+). The protein operates within amino-acid biosynthesis; L-histidine biosynthesis; L-histidine from 5-phospho-alpha-D-ribose 1-diphosphate: step 9/9. Functionally, catalyzes the sequential NAD-dependent oxidations of L-histidinol to L-histidinaldehyde and then to L-histidine. The polypeptide is Histidinol dehydrogenase (Streptomyces avermitilis (strain ATCC 31267 / DSM 46492 / JCM 5070 / NBRC 14893 / NCIMB 12804 / NRRL 8165 / MA-4680)).